The chain runs to 437 residues: GTP-binding protein ERG (437 aa).

A compositionally biased stretch (polar residues) spans 39–50 (QPNLDEPTSINE). The disordered stretch occupies residues 39-65 (QPNLDEPTSINEDGSSSDSVFDSSQYP). Residues 51 to 62 (DGSSSDSVFDSS) are compositionally biased toward low complexity. 2 positions are modified to phosphoserine: Ser-111 and Ser-112. The 182-residue stretch at 152 to 333 (KSLNVGIIGP…LMDQAVKKPW (182 aa)) folds into the Era-type G domain. Residues 160 to 167 (GPPNAGKS) form a G1 region. 160-167 (GPPNAGKS) is a binding site for GTP. The G2 stretch occupies residues 186–190 (NTTTH). A G3 region spans residues 207–210 (DTPG). GTP is bound by residues 207 to 211 (DTPGL) and 279 to 282 (NKVD). The G4 stretch occupies residues 279–282 (NKVD). The G5 stretch occupies residues 309–311 (ISG). Positions 361–437 (VHQEIPYGLE…VHLILQVKLK (77 aa)) constitute a KH type-2 domain.

The protein belongs to the TRAFAC class TrmE-Era-EngA-EngB-Septin-like GTPase superfamily. Era GTPase family.

Has a crucial role in plant growth and development, possibly by influencing mitochondrial division. This Arabidopsis thaliana (Mouse-ear cress) protein is GTP-binding protein ERG (ERG).